The chain runs to 98 residues: NADH-ubiquinone oxidoreductase chain 4L (98 aa).

A run of 3 helical transmembrane segments spans residues 1-21 (MSMVYMNIMLAFTMSLIGLLM), 29-49 (SLLCLEGMMLSLFVMASLMIL), and 61-81 (IILLVFAACEAALGLALLVMI).

Belongs to the complex I subunit 4L family. As to quaternary structure, core subunit of respiratory chain NADH dehydrogenase (Complex I) which is composed of 45 different subunits.

Its subcellular location is the mitochondrion inner membrane. The catalysed reaction is a ubiquinone + NADH + 5 H(+)(in) = a ubiquinol + NAD(+) + 4 H(+)(out). Functionally, core subunit of the mitochondrial membrane respiratory chain NADH dehydrogenase (Complex I) which catalyzes electron transfer from NADH through the respiratory chain, using ubiquinone as an electron acceptor. Part of the enzyme membrane arm which is embedded in the lipid bilayer and involved in proton translocation. This is NADH-ubiquinone oxidoreductase chain 4L (MT-ND4L) from Vicugna pacos (Alpaca).